The primary structure comprises 180 residues: Crossover junction endodeoxyribonuclease RuvC (180 aa).

Catalysis depends on residues Asp9, Glu74, and Asp146. Positions 9, 74, and 146 each coordinate Mg(2+).

This sequence belongs to the RuvC family. In terms of assembly, homodimer which binds Holliday junction (HJ) DNA. The HJ becomes 2-fold symmetrical on binding to RuvC with unstacked arms; it has a different conformation from HJ DNA in complex with RuvA. In the full resolvosome a probable DNA-RuvA(4)-RuvB(12)-RuvC(2) complex forms which resolves the HJ. Requires Mg(2+) as cofactor.

The protein localises to the cytoplasm. The catalysed reaction is Endonucleolytic cleavage at a junction such as a reciprocal single-stranded crossover between two homologous DNA duplexes (Holliday junction).. The RuvA-RuvB-RuvC complex processes Holliday junction (HJ) DNA during genetic recombination and DNA repair. Endonuclease that resolves HJ intermediates. Cleaves cruciform DNA by making single-stranded nicks across the HJ at symmetrical positions within the homologous arms, yielding a 5'-phosphate and a 3'-hydroxyl group; requires a central core of homology in the junction. The consensus cleavage sequence is 5'-(A/T)TT(C/G)-3'. Cleavage occurs on the 3'-side of the TT dinucleotide at the point of strand exchange. HJ branch migration catalyzed by RuvA-RuvB allows RuvC to scan DNA until it finds its consensus sequence, where it cleaves and resolves the cruciform DNA. The chain is Crossover junction endodeoxyribonuclease RuvC from Methylobacillus flagellatus (strain ATCC 51484 / DSM 6875 / VKM B-1610 / KT).